Here is a 195-residue protein sequence, read N- to C-terminus: Nicotinamide riboside kinase 1 (195 aa).

10–18 provides a ligand contact to ATP; that stretch reads GVTNGGKTT. T17 and D36 together coordinate Mg(2+). D36 functions as the Proton acceptor in the catalytic mechanism. Substrate is bound by residues 36–39 and 55–56; these read DDFF and YD. R128 contacts ATP. Residues R129 and 134–135 contribute to the substrate site; that span reads YE. ATP-binding positions include 132–134 and 172–174; these read RVY and RSE.

Belongs to the uridine kinase family. NRK subfamily. Monomer.

It carries out the reaction beta-nicotinamide D-riboside + ATP = beta-nicotinamide D-ribonucleotide + ADP + H(+). It catalyses the reaction beta-D-ribosylnicotinate + ATP = nicotinate beta-D-ribonucleotide + ADP + H(+). It functions in the pathway cofactor biosynthesis; NAD(+) biosynthesis. Catalyzes the phosphorylation of nicotinamide riboside (NR) and nicotinic acid riboside (NaR) to form nicotinamide mononucleotide (NMN) and nicotinic acid mononucleotide (NaMN). This chain is Nicotinamide riboside kinase 1 (Nmrk1), found in Mus musculus (Mouse).